The chain runs to 650 residues: MKTKKSKSTLWFWLIILLAIIVTIIIIAVTVKGTTQVISDATFADWMSKSPQIDPNADKYWKNVIIYYGSNNTVVVKGSYFLESTGKYVNFVAYLTQKRFETIMADKPYPWPALVYQGSVGMALLVSLAPLLIYVLLFGGIIWFMMKSSSGAGAGAGNIFGMGKNRARAEKSDVKFANVAGIEEEKSELVELVDYLKFPAKYAEAGARAPKGVLMEGPPGTGKTLLAKAVAGEAGVSFFSIAGSEFEEMFVGVGASRVREMFNDAKKSAPAIIFIDEIDAVGRKRNNGMGSGGNEQTLNQLLVEMDGFGTNSGIIVMAATNRADVLDPALLRPGRFDRVIQVSLPDIKERKAILELHAKGKKIDGSVDWYRVAERTPGFSGAQLENVLNEAAILMVREKRDIITITEIDEAIDRVVGGPAKKSRAMTKQDKDIVSYHESGHALIGLKLDSASKVQKVTIIPRGNAGGYTIMTPKDETVFSSKKDLFATIAGYLGGRAAEEIMFGKENVTTGAHDDLDKATNIARRMVVQFGMSSLGMTKFLTMAEESYGKMEGTYSDETAARIDAEISKILEESYKIALKIIKENMETLELLAESLRVLETITAEQIEYINVNKKLPEEVLEQKNRMAKEDEKIKKGEIIDIKVEDLDID.

Residues 1–10 lie on the Cytoplasmic side of the membrane; it reads MKTKKSKSTL. The chain crosses the membrane as a helical span at residues 11 to 31; sequence WFWLIILLAIIVTIIIIAVTV. Residues 32–123 are Extracellular-facing; sequence KGTTQVISDA…LVYQGSVGMA (92 aa). The chain crosses the membrane as a helical span at residues 124 to 144; that stretch reads LLVSLAPLLIYVLLFGGIIWF. Over 145 to 650 the chain is Cytoplasmic; that stretch reads MMKSSSGAGA…DIKVEDLDID (506 aa). 217-224 lines the ATP pocket; the sequence is GPPGTGKT. H437 contacts Zn(2+). E438 is an active-site residue. Positions 441 and 515 each coordinate Zn(2+).

The protein in the central section; belongs to the AAA ATPase family. It in the C-terminal section; belongs to the peptidase M41 family. In terms of assembly, homohexamer. The cofactor is Zn(2+).

The protein resides in the cell membrane. Acts as a processive, ATP-dependent zinc metallopeptidase for both cytoplasmic and membrane proteins. Plays a role in the quality control of integral membrane proteins. The chain is ATP-dependent zinc metalloprotease FtsH from Mesoplasma florum (strain ATCC 33453 / NBRC 100688 / NCTC 11704 / L1) (Acholeplasma florum).